The chain runs to 1555 residues: Pre-mRNA cleavage complex 2 protein Pcf11 (1555 aa).

Ser2 is modified (N-acetylserine). Positions 14–142 (AREDACRDYQ…ALDVRVNSLD (129 aa)) constitute a CID domain. At Ser120 the chain carries Phosphoserine; by WNK1. Residue Thr121 is modified to Phosphothreonine; by WNK1. A disordered region spans residues 167 to 186 (NKSPEEPSTPGTVVSSPSIS). Phosphoserine occurs at positions 169 and 182. The segment covering 174-186 (STPGTVVSSPSIS) has biased composition (low complexity). Residues 202–239 (QLIRQQLLAKQKQLLELQQKKLELELEQAKAQLAVSLS) adopt a coiled-coil conformation. The interval 266–648 (VKAPHQVPVQ…QQQHRLSVDA (383 aa)) is disordered. Lys291 is covalently cross-linked (Glycyl lysine isopeptide (Lys-Gly) (interchain with G-Cter in SUMO2)). Over residues 307-317 (HGKDQSHRKEF) the composition is skewed to basic and acidic residues. Positions 320–333 (NTLNQSDTKTSKTI) are enriched in polar residues. Lys328 participates in a covalent cross-link: Glycyl lysine isopeptide (Lys-Gly) (interchain with G-Cter in SUMO2). Basic and acidic residues-rich tracts occupy residues 342–364 (KQEK…DSKS), 380–421 (HTKD…DVKE), and 427–442 (EKKD…EHRL). Lys456 participates in a covalent cross-link: Glycyl lysine isopeptide (Lys-Gly) (interchain with G-Cter in SUMO2). Residue Thr459 is modified to Phosphothreonine. Positions 475-486 (STRKRSRSRSPK) are enriched in basic residues. A phosphoserine mark is found at Ser489, Ser494, Ser509, and Ser511. Residues 494–508 (SPKRRDRRSPKRRQR) are compositionally biased toward basic residues. The span at 529 to 567 (SHMEEFTPPSREDRNAKRSTKQDIRDPRRMKKTEEERPQ) shows a compositional bias: basic and acidic residues. The segment covering 568-578 (ETTNQHSTKSG) has biased composition (polar residues). Basic and acidic residues predominate over residues 599–615 (SGWEENKSLQQVDEHSK). Ser645 is subject to Phosphoserine. A Glycyl lysine isopeptide (Lys-Gly) (interchain with G-Cter in SUMO2) cross-link involves residue Lys654. Ser705 bears the Phosphoserine mark. Disordered regions lie at residues 707–732 (FNDR…PASR) and 749–781 (RPLF…PRID). The segment covering 716–725 (PRYEDSDKPF) has biased composition (basic and acidic residues). A Glycyl lysine isopeptide (Lys-Gly) (interchain with G-Cter in SUMO2) cross-link involves residue Lys723. Phosphoserine occurs at positions 728 and 777. Thr785 is modified (phosphothreonine). Ser794 bears the Phosphoserine mark. 3 positions are modified to asymmetric dimethylarginine: Arg805, Arg820, and Arg833. A Phosphoserine modification is found at Ser851. Asymmetric dimethylarginine is present on residues Arg929, Arg942, Arg955, Arg981, Arg994, and Arg1007. Positions 1056 to 1081 (HGQPGPRFERTPGQPGPQRFDGPPGQ) are disordered. 2 positions are modified to asymmetric dimethylarginine: Arg1093 and Arg1104. Disordered regions lie at residues 1127 to 1147 (VSFN…NAPS) and 1159 to 1187 (FDSP…RASG). Ser1161 is subject to Phosphoserine. Positions 1162 to 1175 (PQGPNFNGPHGPGN) are enriched in low complexity. A Glycyl lysine isopeptide (Lys-Gly) (interchain with G-Cter in SUMO2) cross-link involves residue Lys1278. The segment covering 1289–1298 (SATTQVSEVT) has biased composition (polar residues). A disordered region spans residues 1289-1315 (SATTQVSEVTAQPPPEEEEDQNEDQDV). A compositionally biased stretch (acidic residues) spans 1303-1315 (PEEEEDQNEDQDV). Glycyl lysine isopeptide (Lys-Gly) (interchain with G-Cter in SUMO2) cross-links involve residues Lys1419, Lys1511, and Lys1524. Residues 1516–1555 (EPCDSPKVKEERIDTPPACTEESIATPSEIKTENDTVESV) form a disordered region. Over residues 1519 to 1529 (DSPKVKEERID) the composition is skewed to basic and acidic residues. Thr1530 carries the post-translational modification Phosphothreonine. Lys1546 participates in a covalent cross-link: Glycyl lysine isopeptide (Lys-Gly) (interchain with G-Cter in SUMO2).

Associates with the phosphorylated CTD domain of POLR2A /RNA polymerase II. Post-translationally, phosphorylation at Ser-120 and/or Thr-121 by WNK1 weakens its association with POLR2A/RNA polymerase II, promoting transcript release from the chromatin template and mRNA export to the cytoplasm.

Its subcellular location is the nucleus. In terms of biological role, component of pre-mRNA cleavage complex II, which promotes transcription termination by RNA polymerase II. This is Pre-mRNA cleavage complex 2 protein Pcf11 from Homo sapiens (Human).